We begin with the raw amino-acid sequence, 354 residues long: MTPTTTTAELTTEFDYDEDATPCVFTDVLNQSKPVTLFLYGVVFLFGSIGNFLVIFTITWRRRIQCSGDVYFINLAAADLLFVCTLPLWMQYLLDHNSLASVPCTLLTACFYVAMFASLCFITEIALDRYYAIVYMRYRPVKQACLFSIFWWIFAVIIAIPHFMVVTKKDNQCMTDYDYLEVSYPIILNVELMLGAFVIPLSVISYCYYRISRIVAVSQSRHKGRIVRVLIAVVLVFIIFWLPYHLTLFVDTLKLLKWISSSCEFERSLKRALILTESLAFCHCCLNPLLYVFVGTKFRQELHCLLAEFRQRLFSRDVSWYHSMSFSRRSSPSRRETSSDTLSDEVCRVSQIIP.

Over 1–37 (MTPTTTTAELTTEFDYDEDATPCVFTDVLNQSKPVTL) the chain is Extracellular. An N-linked (GlcNAc...) asparagine; by host glycan is attached at Asn30. The helical transmembrane segment at 38-58 (FLYGVVFLFGSIGNFLVIFTI) threads the bilayer. The Cytoplasmic portion of the chain corresponds to 59–69 (TWRRRIQCSGD). Residues 70–90 (VYFINLAAADLLFVCTLPLWM) traverse the membrane as a helical segment. Residues 91–101 (QYLLDHNSLAS) lie on the Extracellular side of the membrane. Residues 102-122 (VPCTLLTACFYVAMFASLCFI) form a helical membrane-spanning segment. The Cytoplasmic segment spans residues 123 to 145 (TEIALDRYYAIVYMRYRPVKQAC). A helical transmembrane segment spans residues 146–166 (LFSIFWWIFAVIIAIPHFMVV). The Extracellular segment spans residues 167 to 183 (TKKDNQCMTDYDYLEVS). Residues 184 to 204 (YPIILNVELMLGAFVIPLSVI) traverse the membrane as a helical segment. At 205-228 (SYCYYRISRIVAVSQSRHKGRIVR) the chain is on the cytoplasmic side. The helical transmembrane segment at 229–249 (VLIAVVLVFIIFWLPYHLTLF) threads the bilayer. Over 250 to 273 (VDTLKLLKWISSSCEFERSLKRAL) the chain is Extracellular. A helical transmembrane segment spans residues 274–294 (ILTESLAFCHCCLNPLLYVFV). The Cytoplasmic portion of the chain corresponds to 295 to 354 (GTKFRQELHCLLAEFRQRLFSRDVSWYHSMSFSRRSSPSRRETSSDTLSDEVCRVSQIIP).

Belongs to the G-protein coupled receptor 1 family. As to quaternary structure, interacts with host GPRASP1; this interaction targets US28 to lysosomes for degradation. Interacts with host CX3CL1/Fractalkine (via N-terminus). Interacts with host Gi alpha-1 subunit GNAI1; this interaction does not lead to the catalytic activation of Gi complex. Post-translationally, phosphorylated. High phosphorylation occurs concomitantly with receptor endocytosis and correlate with low receptor presence at the plasma membrane.

The protein resides in the host cell membrane. In terms of biological role, binds to a great number of different CC-chemokines including CCL5/RANTES, CCL2/MCP-1, CCL3/MIP-1-alpha as well as CX3CL1/Fractalkine. Transduces signals resulting in the activation of MAP kinase signaling pathways and augmentation of intracellular calcium ion levels, leading to alterations in chemotactic behavior of vascular smooth muscle cells and macrophages. The US28 receptor also exhibits high levels of agonist-independent signaling activity and agonist-independent endocytosis. Interacts with the host Gi complex without activating it, thereby probably interfering with the chemokine-Gi signaling. May also function as a G protein sink to sequester G protein from the cell surface via internalization. Interacts with endogenous Gaq/11 subunits and thereby constitutively activates phospholipase C. This chain is G-protein coupled receptor homolog US28 (US28), found in Homo sapiens (Human).